Here is a 464-residue protein sequence, read N- to C-terminus: L-cystine uptake protein TcyP (464 aa).

10 consecutive transmembrane segments (helical) span residues 3–23 (TLLVGINVAVMLILVGVLYYM), 34–54 (VFTALGVGIIFGLILQFIYEP), 73–93 (YVKLLQMIVMPLILVSIISAF), 107–127 (GLIIGILILTTGIAAAVGIAA), 184–204 (PTSTISVVIFAAFIGIAFIGV), 225–245 (IVMRMVTLILRLTPYGVLALM), 263–283 (FVLASYVALIVMFVIHLLLIA), 347–367 (AGIYPAMLAMMVAPTVGIDPL), 371–391 (FILTLIAVVAISSFGVAGVGG), and 395–415 (FAALIVLSTMNLPIGIVALVI).

This sequence belongs to the dicarboxylate/amino acid:cation symporter (DAACS) (TC 2.A.23) family.

It localises to the membrane. In terms of biological role, mediates uptake of L-cystine, the oxidized form of L-cysteine. The chain is L-cystine uptake protein TcyP from Bacillus thuringiensis subsp. konkukian (strain 97-27).